Reading from the N-terminus, the 811-residue chain is Glycerol-3-phosphate acyltransferase (811 aa).

The HXXXXD motif signature appears at 303–308; sequence CHRSHM.

This sequence belongs to the GPAT/DAPAT family.

It localises to the cell inner membrane. The catalysed reaction is sn-glycerol 3-phosphate + an acyl-CoA = a 1-acyl-sn-glycero-3-phosphate + CoA. The protein operates within phospholipid metabolism; CDP-diacylglycerol biosynthesis; CDP-diacylglycerol from sn-glycerol 3-phosphate: step 1/3. The sequence is that of Glycerol-3-phosphate acyltransferase from Glaesserella parasuis serovar 5 (strain SH0165) (Haemophilus parasuis).